Consider the following 890-residue polypeptide: Kinesin-like protein KIN-7C, mitochondrial (890 aa).

The segment covering 1 to 13 (MSATRSQRSSTIS) has biased composition (polar residues). The tract at residues 1 to 66 (MSATRSQRSS…TSSAAASSTA (66 aa)) is disordered. The transit peptide at 1 to 73 (MSATRSQRSS…STAVASTKLK (73 aa)) directs the protein to the mitochondrion. A compositionally biased stretch (low complexity) spans 40–66 (SPVTSSSPLLRSSPSPSTSSAAASSTA). The 320-residue stretch at 75–394 (NITVTIRFRP…LKFAQRCKHV (320 aa)) folds into the Kinesin motor domain. 155 to 162 (GVTSSGKT) is a binding site for ATP. Residues 395 to 468 (EIKASRNKIM…MGRIQRLTKL (74 aa)) are a coiled coil. Positions 511–595 (DGAVSTVSEH…TTRRENAAAI (85 aa)) are disordered. Positions 569–579 (SQASGSPSSSS) are enriched in low complexity. Coiled coils occupy residues 664–693 (HIRD…IIEI) and 729–765 (ADNR…LAER). The interval 768–797 (TQQIAGDESSGKNIHNRNGEESEIYSGAGT) is disordered. Residues 818–884 (NETALNSQAL…AEEVTRLCNE (67 aa)) adopt a coiled-coil conformation.

The protein belongs to the TRAFAC class myosin-kinesin ATPase superfamily. Kinesin family. KIN-7 subfamily.

Its subcellular location is the mitochondrion. The protein is Kinesin-like protein KIN-7C, mitochondrial of Arabidopsis thaliana (Mouse-ear cress).